Here is a 115-residue protein sequence, read N- to C-terminus: Probable 4-amino-4-deoxy-L-arabinose-phosphoundecaprenol flippase subunit ArnE (115 aa).

3 helical membrane-spanning segments follow: residues 42–62 (PWPW…LLLL), 65–85 (VEVG…TLAA), and 93–112 (VDRR…ALLG). The 68-residue stretch at 46–113 (LALLALGLGL…IVAGVALLGR (68 aa)) folds into the EamA domain.

It belongs to the ArnE family. In terms of assembly, heterodimer of ArnE and ArnF.

The protein localises to the cell inner membrane. It functions in the pathway bacterial outer membrane biogenesis; lipopolysaccharide biosynthesis. Functionally, translocates 4-amino-4-deoxy-L-arabinose-phosphoundecaprenol (alpha-L-Ara4N-phosphoundecaprenol) from the cytoplasmic to the periplasmic side of the inner membrane. This is Probable 4-amino-4-deoxy-L-arabinose-phosphoundecaprenol flippase subunit ArnE from Pseudomonas aeruginosa (strain LESB58).